We begin with the raw amino-acid sequence, 342 residues long: Probable dual-specificity RNA methyltransferase RlmN (342 aa).

Glu91 serves as the catalytic Proton acceptor. The Radical SAM core domain maps to 97-327; sequence YKHGNSICVS…TTIRREMGAD (231 aa). Cysteines 104 and 332 form a disulfide. 3 residues coordinate [4Fe-4S] cluster: Cys111, Cys115, and Cys118. S-adenosyl-L-methionine-binding positions include 158–159, Ser190, 213–215, and Asn289; these read GE and SLH. The active-site S-methylcysteine intermediate is the Cys332.

The protein belongs to the radical SAM superfamily. RlmN family. [4Fe-4S] cluster is required as a cofactor.

The protein resides in the cytoplasm. The catalysed reaction is adenosine(2503) in 23S rRNA + 2 reduced [2Fe-2S]-[ferredoxin] + 2 S-adenosyl-L-methionine = 2-methyladenosine(2503) in 23S rRNA + 5'-deoxyadenosine + L-methionine + 2 oxidized [2Fe-2S]-[ferredoxin] + S-adenosyl-L-homocysteine. The enzyme catalyses adenosine(37) in tRNA + 2 reduced [2Fe-2S]-[ferredoxin] + 2 S-adenosyl-L-methionine = 2-methyladenosine(37) in tRNA + 5'-deoxyadenosine + L-methionine + 2 oxidized [2Fe-2S]-[ferredoxin] + S-adenosyl-L-homocysteine. Specifically methylates position 2 of adenine 2503 in 23S rRNA and position 2 of adenine 37 in tRNAs. This is Probable dual-specificity RNA methyltransferase RlmN from Clostridium botulinum (strain Langeland / NCTC 10281 / Type F).